We begin with the raw amino-acid sequence, 288 residues long: Acetyl-coenzyme A carboxylase carboxyl transferase subunit beta (288 aa).

The 255-residue stretch at 34 to 288 folds into the CoA carboxyltransferase N-terminal domain; sequence LFAKCPACKH…HLVAFHGGGQ (255 aa). Cys-38, Cys-41, Cys-56, and Cys-59 together coordinate Zn(2+). The C4-type zinc-finger motif lies at 38-59; sequence CPACKHMIYKKDLGLAKICPTC.

The protein belongs to the AccD/PCCB family. Acetyl-CoA carboxylase is a heterohexamer composed of biotin carboxyl carrier protein (AccB), biotin carboxylase (AccC) and two subunits each of ACCase subunit alpha (AccA) and ACCase subunit beta (AccD). It depends on Zn(2+) as a cofactor.

The protein resides in the cytoplasm. It catalyses the reaction N(6)-carboxybiotinyl-L-lysyl-[protein] + acetyl-CoA = N(6)-biotinyl-L-lysyl-[protein] + malonyl-CoA. It participates in lipid metabolism; malonyl-CoA biosynthesis; malonyl-CoA from acetyl-CoA: step 1/1. Component of the acetyl coenzyme A carboxylase (ACC) complex. Biotin carboxylase (BC) catalyzes the carboxylation of biotin on its carrier protein (BCCP) and then the CO(2) group is transferred by the transcarboxylase to acetyl-CoA to form malonyl-CoA. This Streptococcus pyogenes serotype M28 (strain MGAS6180) protein is Acetyl-coenzyme A carboxylase carboxyl transferase subunit beta.